Consider the following 500-residue polypeptide: NF-kappa-B inhibitor epsilon (500 aa).

A compositionally biased stretch (basic and acidic residues) spans 1-10 (MNQRRSESRP). Disordered regions lie at residues 1–66 (MNQR…PAWA), 84–215 (LSSL…YGSS), and 222–241 (SLLG…LPHV). Phosphoserine occurs at positions 157, 161, and 183. Over residues 161-186 (SLRSLRSLPESTSAPASGPSDGSPQP) the composition is skewed to low complexity. Basic and acidic residues predominate over residues 196–209 (EPQEKEDADGERAD). 6 ANK repeats span residues 258 to 291 (DGDT…DIQN), 293 to 322 (LYQT…SRAL), 326 to 355 (HGDT…EPGR), 369 to 398 (QGLA…DIDV), 403 to 432 (SGKT…QVDA), and 436 to 465 (NGCT…DSLL).

It belongs to the NF-kappa-B inhibitor family. In terms of assembly, interacts with RELA, REL, NFKB1 nuclear factor NF-kappa-B p50 subunit and NFKB2 nuclear factor NF-kappa-B p52 subunit. Interacts with HNRNPA2B1; the interaction may be mediated by the RRM2 domain of HNRNPA2B1, and HNRNPA2B1 may interact simultaneously with FAM76B and either NFKBIA or NFKBIE to form a complex. In terms of processing, serine phosphorylated; followed by proteasome-dependent degradation. Highly expressed in spleen, testis and lung, followed by kidney, pancreas, heart, placenta and brain. Also expressed in granulocytes and macrophages.

The protein localises to the cytoplasm. Sequesters NF-kappa-B transcription factor complexes in the cytoplasm, thereby inhibiting their activity. Sequestered complexes include NFKB1-RELA (p50-p65) and NFKB1-REL (p50-c-Rel) complexes. Limits B-cell activation in response to pathogens, and also plays an important role in B-cell development. The chain is NF-kappa-B inhibitor epsilon (NFKBIE) from Homo sapiens (Human).